We begin with the raw amino-acid sequence, 360 residues long: MIEDTMTLLSLLGRIMRYFLLRPETLFLLCISLALWSYFFHTDEVKTIVKSSRDAVKMVKGKVAEIMQNDRLGGLDVLEAEFSKTWEFKSHNVAVYSIQGRRDHMEDRFEVLMDLANKTHPSIFGIFDGHGGETAAEYVKSRLPEALKQHLQDYEKDKENSVLSYQTILEQQILSIDREMLEKLTVSYDEAGTTCLIALLSDKDLTVANVGDSRGVLCDKDGNAIPLSHDHKPYQLKERKRIKRAGGFISFNGSWRVQGILAMSRSLGDYPLKNLNVVIPDPDILTFDLDKLQPEFMILASDGLWDAFSNEEAVRFIKDRLDEPHFGAKSIVLQSFYRGCPDNITVMVVKFRNSSKTEEQ.

Residues 1–25 (MIEDTMTLLSLLGRIMRYFLLRPET) are Extracellular-facing. Residues 26–42 (LFLLCISLALWSYFFHT) traverse the membrane as a helical segment. Topologically, residues 43-360 (DEVKTIVKSS…FRNSSKTEEQ (318 aa)) are cytoplasmic. Residues 92–351 (NVAVYSIQGR…DNITVMVVKF (260 aa)) form the PPM-type phosphatase domain. Positions 128, 129, 302, and 342 each coordinate Mn(2+).

Belongs to the PP2C family. As to quaternary structure, interacts with MAP3K7/TAK1 and MAP3K5. Requires Mg(2+) as cofactor. Mn(2+) is required as a cofactor.

Its subcellular location is the membrane. The enzyme catalyses O-phospho-L-seryl-[protein] + H2O = L-seryl-[protein] + phosphate. It catalyses the reaction O-phospho-L-threonyl-[protein] + H2O = L-threonyl-[protein] + phosphate. In terms of biological role, acts as a suppressor of the SAPK signaling pathways by associating with and dephosphorylating MAP3K7/TAK1 and MAP3K5, and by attenuating the association between MAP3K7/TAK1 and MAP2K4 or MAP2K6. The chain is Protein phosphatase 1L (PPM1L) from Bos taurus (Bovine).